The chain runs to 575 residues: Protein NRT1/ PTR FAMILY 5.6 (575 aa).

The next 2 membrane-spanning stretches (helical) occupy residues 44 to 64 and 88 to 108; these read AALF…GLAT and WSGV…AYLG. T112 is subject to Phosphothreonine. 10 helical membrane-spanning segments follow: residues 113 to 133, 153 to 173, 195 to 215, 223 to 243, 339 to 359, 375 to 395, 420 to 440, 457 to 477, 493 to 513, and 541 to 561; these read VLVA…SWFI, VAFF…KPSL, FFNW…TAVA, WGVA…IFFI, LIIN…CATQ, IGGF…TLII, ILQR…IAAL, VIWL…TLVG, LGIA…NLLI, and FYWF…IVAK.

This sequence belongs to the major facilitator superfamily. Proton-dependent oligopeptide transporter (POT/PTR) (TC 2.A.17) family. As to expression, expressed in stems, shoots, leaves, flowers and siliques.

It localises to the membrane. The sequence is that of Protein NRT1/ PTR FAMILY 5.6 (NPF5.6) from Arabidopsis thaliana (Mouse-ear cress).